The following is a 342-amino-acid chain: Voltage-gated hydrogen channel 1 (342 aa).

Disordered stretches follow at residues 1–20 (MEGD…INPN) and 74–102 (FNDN…SEQK). The Cytoplasmic portion of the chain corresponds to 1–148 (MEGDNCNKSR…KLRHILHSKP (148 aa)). Residues 86–102 (QEQSTQNTMISMQSEQK) are compositionally biased toward polar residues. Residues 149-169 (IHVAIIVLVVLDSFLVVGELL) form a helical membrane-spanning segment. At 170–185 (IDLKVIIVPHGNPAPE) the chain is on the extracellular side. A helical membrane pass occupies residues 186–208 (ILHGFSLSILSIFMVEIALKIIA). Over 209–217 (DHRHFIHHK) the chain is Cytoplasmic. A helical transmembrane segment spans residues 218-238 (VEVLDAVVVVISFGVDIALIF). Over 239–247 (VGESEALAA) the chain is Extracellular. A helical transmembrane segment spans residues 248-268 (IGLLVILRLWRVFRIINGIIV). Residues 269–342 (TVKTKADDRV…HSTTTASADV (74 aa)) are Cytoplasmic-facing. The stretch at 271–315 (KTKADDRVHEIKKKNSELELQIHNLEEKLSQKEQDMSRLHEILRC) forms a coiled coil.

The protein belongs to the hydrogen channel family. In terms of assembly, homodimer.

The protein resides in the membrane. The protein localises to the cell membrane. Its activity is regulated as follows. Less sensitive to zinc ions as compared to the mammalian homologs. In terms of biological role, mediates the voltage-dependent proton permeability of excitable membranes. Forms a proton-selective channel through which protons may pass in accordance with their electrochemical gradient. In Ciona intestinalis (Transparent sea squirt), this protein is Voltage-gated hydrogen channel 1 (HVCN1).